Consider the following 418-residue polypeptide: Serine hydroxymethyltransferase (418 aa).

(6S)-5,6,7,8-tetrahydrofolate is bound by residues L121 and 125–127; that span reads GHL. K230 is modified (N6-(pyridoxal phosphate)lysine). (6S)-5,6,7,8-tetrahydrofolate is bound by residues E246 and 355–357; that span reads SPF.

It belongs to the SHMT family. In terms of assembly, homodimer. Requires pyridoxal 5'-phosphate as cofactor.

It localises to the cytoplasm. It catalyses the reaction (6R)-5,10-methylene-5,6,7,8-tetrahydrofolate + glycine + H2O = (6S)-5,6,7,8-tetrahydrofolate + L-serine. It functions in the pathway one-carbon metabolism; tetrahydrofolate interconversion. The protein operates within amino-acid biosynthesis; glycine biosynthesis; glycine from L-serine: step 1/1. Functionally, catalyzes the reversible interconversion of serine and glycine with tetrahydrofolate (THF) serving as the one-carbon carrier. This reaction serves as the major source of one-carbon groups required for the biosynthesis of purines, thymidylate, methionine, and other important biomolecules. Also exhibits THF-independent aldolase activity toward beta-hydroxyamino acids, producing glycine and aldehydes, via a retro-aldol mechanism. The protein is Serine hydroxymethyltransferase of Streptococcus pneumoniae (strain Hungary19A-6).